The primary structure comprises 348 residues: Probable mitochondrial adenine nucleotide transporter BTL1 (348 aa).

3 Solcar repeats span residues 46–129 (SREA…VKRA), 157–241 (SWIS…MKTS), and 251–338 (LSRP…WKDI). The next 6 membrane-spanning stretches (helical) occupy residues 52–72 (FLSG…LETI), 104–124 (GNEI…GTFE), 156–176 (ISWI…STLV), 213–233 (FYAG…CYYF), 256–276 (MLVL…PLEV), and 321–341 (VMPS…ILLA).

The protein belongs to the mitochondrial carrier (TC 2.A.29) family.

The protein localises to the mitochondrion inner membrane. Functionally, probable mitochondrial adenylate carrier that catalyzes the transport of ATP, ADP and AMP. The sequence is that of Probable mitochondrial adenine nucleotide transporter BTL1 from Arabidopsis thaliana (Mouse-ear cress).